Consider the following 225-residue polypeptide: Uracil-DNA glycosylase (225 aa).

Asp65 serves as the catalytic Proton acceptor.

It belongs to the uracil-DNA glycosylase (UDG) superfamily. UNG family.

The protein localises to the cytoplasm. It carries out the reaction Hydrolyzes single-stranded DNA or mismatched double-stranded DNA and polynucleotides, releasing free uracil.. In terms of biological role, excises uracil residues from the DNA which can arise as a result of misincorporation of dUMP residues by DNA polymerase or due to deamination of cytosine. The chain is Uracil-DNA glycosylase from Bacillus cereus (strain ATCC 10987 / NRS 248).